The sequence spans 86 residues: Large ribosomal subunit protein bL27 (86 aa).

Residues 1-10 (MAQKKGGGST) are compositionally biased toward gly residues. The segment at 1–20 (MAQKKGGGSTRNGRDSESKR) is disordered.

It belongs to the bacterial ribosomal protein bL27 family.

The sequence is that of Large ribosomal subunit protein bL27 from Bordetella parapertussis (strain 12822 / ATCC BAA-587 / NCTC 13253).